Reading from the N-terminus, the 498-residue chain is Beta-1,3-glucosyltransferase (498 aa).

Topologically, residues 1-6 are cytoplasmic; the sequence is MRPPAC. Residues 7 to 27 traverse the membrane as a helical; Signal-anchor for type II membrane protein segment; it reads WWLLAPPALLALLTCSLAFGL. At 28–498 the chain is on the lumenal side; that stretch reads ASEDTKKEVK…ETQKGFREEL (471 aa). N-linked (GlcNAc...) asparagine glycosylation occurs at N336. A Prevents secretion from ER motif is present at residues 495 to 498; the sequence is REEL.

This sequence belongs to the glycosyltransferase 31 family. As to expression, widely expressed, with highest levels in testis and uterus.

The protein resides in the endoplasmic reticulum membrane. It participates in protein modification; protein glycosylation. O-glucosyltransferase that transfers glucose toward fucose with a beta-1,3 linkage. Specifically glucosylates O-linked fucosylglycan on TSP type-1 domains of proteins, thereby contributing to elongation of O-fucosylglycan. The sequence is that of Beta-1,3-glucosyltransferase from Homo sapiens (Human).